A 376-amino-acid polypeptide reads, in one-letter code: UDP-4-amino-4,6-dideoxy-N-acetyl-beta-L-altrosamine transaminase (376 aa).

Residues tyrosine 4, 24 to 27 (EILT), alanine 54, and serine 176 each bind substrate. Lysine 181 carries the post-translational modification N6-(pyridoxal phosphate)lysine. Substrate contacts are provided by residues asparagine 226 and 311 to 314 (QVHY).

The protein belongs to the DegT/DnrJ/EryC1 family.

It carries out the reaction UDP-4-amino-4,6-dideoxy-N-acetyl-beta-L-altrosamine + 2-oxoglutarate = UDP-2-acetamido-2,6-dideoxy-beta-L-arabino-hex-4-ulose + L-glutamate. Catalyzes the second step in the biosynthesis of pseudaminic acid, a sialic-acid-like sugar that is used to modify flagellin. Uses UDP-2-acetamido-2,6-dideoxy-beta-L-arabino-4-hexulose as substrate producing UDP-4-amino-4,6-dideoxy-beta-L-AltNAc. The protein is UDP-4-amino-4,6-dideoxy-N-acetyl-beta-L-altrosamine transaminase (pseC) of Campylobacter jejuni subsp. jejuni serotype O:23/36 (strain 81-176).